The sequence spans 604 residues: 3-hydroxy-3-methylglutaryl-coenzyme A reductase (604 aa).

The tract at residues 1–31 is disordered; that stretch reads MDVRRRSEKPAYPTKEFAAGEKPLKPHKQQQ. 2 helical membrane-spanning segments follow: residues 40–62 and 90–110; these read ASDA…FFSV and AIAS…IGFV. Residues 111–189 are linker; sequence QSFVSRDNND…PLVTPAASEE (79 aa). A catalytic region spans residues 190–604; it reads DEEIIKSVVQ…STKDVTKASS (415 aa). Catalysis depends on glutamate 283, which acts as the Charge relay system. Asparagine 347 is a glycosylation site (N-linked (GlcNAc...) asparagine). The active-site Charge relay system is the lysine 415. Asparagine 460 carries an N-linked (GlcNAc...) asparagine glycan. Catalysis depends on aspartate 491, which acts as the Charge relay system. Histidine 589 functions as the Proton donor in the catalytic mechanism. Asparagine 593 is a glycosylation site (N-linked (GlcNAc...) asparagine).

This sequence belongs to the HMG-CoA reductase family. Found in protoplasts and leaves submitted to stress. Low levels found in apexes, anthers and roots.

It is found in the endoplasmic reticulum membrane. It catalyses the reaction (R)-mevalonate + 2 NADP(+) + CoA = (3S)-3-hydroxy-3-methylglutaryl-CoA + 2 NADPH + 2 H(+). It participates in metabolic intermediate biosynthesis; (R)-mevalonate biosynthesis; (R)-mevalonate from acetyl-CoA: step 3/3. Its function is as follows. Catalyzes the synthesis of mevalonate, the specific precursor of all isoprenoid compounds present in plants. Possible role in plant defense mechanisms as well as in the cell cycle. The protein is 3-hydroxy-3-methylglutaryl-coenzyme A reductase (HMGR) of Nicotiana sylvestris (Wood tobacco).